A 471-amino-acid chain; its full sequence is MAGEDHQWQGSILYNMLMSAKQTHATREAPEARLRGSCWGCSCGSEPPVGREGQPGGPAVALLYRCCFCGEDHPRQGSILYNMLTSAKQTQETPEAPEARLGGACWGCSCGSEPRVGREELPGGRATVLLYRCCFCGEEHPRQGSILYSLLTSAKQTHVALEAPEARPGGAWWDRSYCAQRLGAREELPGGRPVTLPYRCCFCGEDHPRQSGILCNMPMSAKQTHVAPEAQPGAPWWDPSCAAQRVALKSPQVVCEAASAGLLKTLRFVKYLPCFQVLPLDQQLVLVRSCWAPLLMLELAQDRLNFETVETLEPSLLQMILTTRRQETEGDEPPSPQPPVQPHLVLPSEAEHLPSVAEVQAIKGFLAKCWSLDISTKEYAYLKGTVLFNPDLPGLQCVKYIQGLQWGTQQILSEHIRMTHRGYQARFAELNSALFLLRFINANVLAELFFRPIIGTVSMDDMMLEMLCAKL.

A run of 3 repeats spans residues 1–67 (MAGE…YRCC), 68–134 (FCGE…YRCC), and 135–201 (FCGE…YRCC). A 4 X 67 AA tandem repeats region spans residues 1–253 (MAGEDHQWQG…QRVALKSPQV (253 aa)). 3 short sequence motifs (LXXLL motif) span residues 13–17 (LYNML), 80–84 (LYNML), and 147–151 (LYSLL). The stretch at 202–253 (FCGEDHPRQSGILCNMPMSAKQTHVAPEAQPGAPWWDPSCAAQRVALKSPQV) is one 4; truncated repeat. In terms of domain architecture, NR LBD spans 210–470 (QSGILCNMPM…DMMLEMLCAK (261 aa)). Positions 462–467 (MMLEML) match the AF-2 motif motif.

The protein belongs to the nuclear hormone receptor family. NR0 subfamily. As to quaternary structure, homodimer. Interacts with NR5A1, NR5A2, NR0B2 and with COPS2. Interacts with ESRRB; represses ESRRB activity at the GATA6 promoter.

It localises to the nucleus. Its subcellular location is the cytoplasm. Nuclear receptor that lacks a DNA-binding domain and acts as a corepressor that inhibits the transcriptional activity of other nuclear receptors through heterodimeric interactions. Component of a cascade required for the development of the hypothalamic-pituitary-adrenal-gonadal axis. May also have a role in the development of the embryo and in the maintenance of embryonic stem cell pluripotency. This Sus scrofa (Pig) protein is Nuclear receptor subfamily 0 group B member 1 (NR0B1).